Here is a 72-residue protein sequence, read N- to C-terminus: UPF0729 protein C18orf32 homolog (72 aa).

The necessary for its localzation to the endoplasmic reticulum and lipid droplets stretch occupies residues 1–33 (MVCIPCIVIPVLLWIFKKFLEPYIYPVVSRIWP). A disordered region spans residues 45-72 (TGKVDCKGADTNGFSTKGPTEVSDKKKD).

It belongs to the UPF0729 family. As to quaternary structure, interacts with DERL1 and AMFR. In terms of processing, undergoes ER-associated degradation (ERAD).

It is found in the endoplasmic reticulum. Its subcellular location is the lipid droplet. Its function is as follows. May activate the NF-kappa-B signaling pathway. In Rattus norvegicus (Rat), this protein is UPF0729 protein C18orf32 homolog.